The sequence spans 311 residues: Solute carrier family 25 member 36-A (311 aa).

3 Solcar repeats span residues 4–108, 116–203, and 224–308; these read RDTL…SKEK, DSTQ…IKRK, and SDFV…VVYL. Helical transmembrane passes span 7–27, 41–57, 111–131, 180–200, 226–246, and 291–311; these read LVHL…TCPL, FYIS…ASVA, NVFD…AGFT, MSAS…YESI, FVGM…IAYP, and QIPN…LLNG.

This sequence belongs to the mitochondrial carrier (TC 2.A.29) family.

It localises to the mitochondrion inner membrane. The chain is Solute carrier family 25 member 36-A (slc25a36a) from Danio rerio (Zebrafish).